A 423-amino-acid polypeptide reads, in one-letter code: Deferrochelatase (423 aa).

Positions 1-35 (MQYEDKNGVNEPSRRRLLKGIGALALAGSCPVAHA) form a signal peptide, tat-type signal. Heme b-binding positions include 236–238 (GTA), H329, 334–336 (NPR), and R347.

This sequence belongs to the DyP-type peroxidase family. EfeB subfamily. In terms of assembly, the heme-bound EfeB forms a homodimer whereas the apo-form mainly exists as a monomer. Part of a ferrous iron transporter composed of EfeU, EfeO and EfeB. It depends on heme b as a cofactor. Predicted to be exported by the Tat system. The position of the signal peptide cleavage has not been experimentally proven.

It localises to the periplasm. It catalyses the reaction heme b + 2 H(+) = protoporphyrin IX + Fe(2+). Functionally, involved in the recovery of exogenous heme iron. Extracts iron from heme while preserving the protoporphyrin ring intact. Also displays peroxidase activity on guaiacol and catechol in vitro. The deferrochelatase activity appears to be closely related to the peroxidation activity, but the link is unclear. This Escherichia coli O157:H7 protein is Deferrochelatase (efeB).